The primary structure comprises 201 residues: Ribosomal RNA large subunit methyltransferase E (201 aa).

S-adenosyl-L-methionine is bound by residues Gly49, Trp51, Asp69, Asp87, and Asp111. The active-site Proton acceptor is Lys151.

The protein belongs to the class I-like SAM-binding methyltransferase superfamily. RNA methyltransferase RlmE family.

It localises to the cytoplasm. It catalyses the reaction uridine(2552) in 23S rRNA + S-adenosyl-L-methionine = 2'-O-methyluridine(2552) in 23S rRNA + S-adenosyl-L-homocysteine + H(+). Functionally, specifically methylates the uridine in position 2552 of 23S rRNA at the 2'-O position of the ribose in the fully assembled 50S ribosomal subunit. The chain is Ribosomal RNA large subunit methyltransferase E from Nitratidesulfovibrio vulgaris (strain DSM 19637 / Miyazaki F) (Desulfovibrio vulgaris).